We begin with the raw amino-acid sequence, 782 residues long: Glucocorticoid receptor (782 aa).

A disordered region spans residues 1–20; the sequence is MDPKESLTPPSREEIPSSVL. The tract at residues 1–425 is modulating; sequence MDPKESLTPP…SAATGPPPKL (425 aa). Position 8 is a phosphothreonine (T8). An Omega-N-methylarginine modification is found at R24. S46 is modified (phosphoserine). The tract at residues 48 to 79 is disordered; the sequence is SLAAVSQPDSKQQRLAVDFPKGSGSNAQQPDL. Phosphoserine occurs at positions 114, 135, 142, 208, 216, and 231. The interval 130 to 184 is disordered; the sequence is LSRSTSVPENPKSSASAAGPAAPAEKAFPKTHSDGAPEQPNVKGQTGTNGGNVKL. Low complexity predominate over residues 140 to 155; that stretch reads PKSSASAAGPAAPAEK. K263 participates in a covalent cross-link: Glycyl lysine isopeptide (Lys-Gly) (interchain with G-Cter in SUMO2). A Phosphoserine modification is found at S272. Glycyl lysine isopeptide (Lys-Gly) (interchain with G-Cter in SUMO); alternate cross-links involve residues K282 and K298. Residues K282 and K298 each participate in a glycyl lysine isopeptide (Lys-Gly) (interchain with G-Cter in SUMO2); alternate cross-link. Residues S312 and S410 each carry the phosphoserine modification. K424 participates in a covalent cross-link: Glycyl lysine isopeptide (Lys-Gly) (interchain with G-Cter in ubiquitin). 2 NR C4-type zinc fingers span residues 426–446 and 462–486; these read CLVC…CGSC and CAGR…YRKC. The nuclear receptor DNA-binding region spans 426–491; that stretch reads CLVCSDEASG…RYRKCLQAGM (66 aa). 4 positions are modified to N6-acetyllysine: K485, K497, K499, and K500. The segment at 490–782 is interaction with CLOCK; the sequence is GMNLEARKTK…NIKKLLFHQK (293 aa). Residues 492–528 are hinge; the sequence is NLEARKTKKKIKGIQQATTGVSQETSENSANKTIVPA. An NR LBD domain is found at 529–763; the sequence is TLPQLTPTLV…FPEMLAEIIT (235 aa). The interval 537 to 702 is interaction with CRY1; the sequence is LVSLLEVIEP…EIRMTYIKEL (166 aa). K708 participates in a covalent cross-link: Glycyl lysine isopeptide (Lys-Gly) (interchain with G-Cter in SUMO).

This sequence belongs to the nuclear hormone receptor family. NR3 subfamily. As to quaternary structure, heteromultimeric cytoplasmic complex with HSP90AA1, HSPA1A/HSPA1B, and FKBP5 or another immunophilin such as PPID, STIP1, or the immunophilin homolog PPP5C. Upon ligand binding FKBP5 dissociates from the complex and FKBP4 takes its place, thereby linking the complex to dynein and mediating transport to the nucleus, where the complex dissociates. Probably forms a complex composed of chaperones HSP90 and HSP70, co-chaperones CDC37, PPP5C, TSC1 and client protein TSC2, CDK4, AKT, RAF1 and NR3C1; this complex does not contain co-chaperones STIP1/HOP and PTGES3/p23. Directly interacts with UNC45A. Binds to DNA as a homodimer, and as heterodimer with NR3C2 or the retinoid X receptor. Binds STAT5A and STAT5B homodimers and heterodimers. Interacts with NRIP1, POU2F1, POU2F2 and TRIM28. Interacts with several coactivator complexes, including the SMARCA4 complex, CREBBP/EP300, TADA2L (Ada complex) and p160 coactivators such as NCOA2 and NCOA6. Interaction with BAG1 inhibits transactivation. Interacts with HEXIM1 and TGFB1I1. Interacts with NCOA1. Interacts with NCOA3, SMARCA4, SMARCC1, SMARCD1, and SMARCE1. Interacts with CLOCK, CRY1 and CRY2 in a ligand-dependent fashion. Interacts with CIART. Interacts with RWDD3. Interacts with UBE2I/UBC9 and this interaction is enhanced in the presence of RWDD3. Interacts with GRIP1. Interacts with NR4A3 (via nuclear receptor DNA-binding domain), represses transcription activity of NR4A3 on the POMC promoter Nur response element (NurRE). Directly interacts with PNRC2 to attract and form a complex with UPF1 and DCP1A; the interaction leads to rapid mRNA degradation. Interacts with GSK3B. Interacts with FNIP1 and FNIP2. Interacts (via C-terminus) with HNRNPU (via C-terminus). Interacts with MCM3AP. Interacts (via domain NR LBD) with HSP90AA1 and HSP90AB1. In the absence of hormonal ligand, interacts with TACC1. Interacts (via NR LBD domain) with ZNF764 (via KRAB domain); the interaction regulates transcription factor activity of NR3C1 by directing its actions toward certain biologic pathways. Post-translationally, acetylation by CLOCK reduces its binding to glucocorticoid response elements and its transcriptional activity. In terms of processing, increased proteasome-mediated degradation in response to glucocorticoids. Phosphorylated in the absence of hormone; becomes hyperphosphorylated in the presence of glucocorticoid. The Ser-208, Ser-231 and Ser-410-phosphorylated forms are mainly cytoplasmic, and the Ser-216-phosphorylated form is nuclear. Phosphorylation at Ser-216 increases transcriptional activity. Phosphorylation at Ser-208, Ser-231 and Ser-410 decreases signaling capacity. Phosphorylation at Ser-410 may protect from glucocorticoid-induced apoptosis. Phosphorylation at Ser-208 and Ser-216 is not required in regulation of chromosome segregation. May be dephosphorylated by PPP5C, attenuates NR3C1 action. Post-translationally, ubiquitinated by UBR5, leading to its degradation: UBR5 specifically recognizes and binds ligand-bound NR3C1 when it is not associated with coactivators (NCOAs). In presence of NCOAs, the UBR5-degron is not accessible, preventing its ubiquitination and degradation. In terms of processing, sumoylation at Lys-282 and Lys-298 negatively regulates its transcriptional activity. Sumoylation at Lys-708 positively regulates its transcriptional activity in the presence of RWDD3. Sumoylation at Lys-282 and Lys-298 is dispensable whereas sumoylation at Lys-708 is critical for the stimulatory effect of RWDD3 on its transcriptional activity. Heat shock increases sumoylation in a RWDD3-dependent manner.

It is found in the cytoplasm. The protein resides in the nucleus. It localises to the mitochondrion. The protein localises to the cytoskeleton. Its subcellular location is the spindle. It is found in the microtubule organizing center. The protein resides in the centrosome. It localises to the chromosome. The protein localises to the nucleoplasm. Its function is as follows. Receptor for glucocorticoids (GC). Has a dual mode of action: as a transcription factor that binds to glucocorticoid response elements (GRE), both for nuclear and mitochondrial DNA, and as a modulator of other transcription factors. Affects inflammatory responses, cellular proliferation and differentiation in target tissues. Involved in chromatin remodeling. Plays a role in rapid mRNA degradation by binding to the 5' UTR of target mRNAs and interacting with PNRC2 in a ligand-dependent manner which recruits the RNA helicase UPF1 and the mRNA-decapping enzyme DCP1A, leading to RNA decay. Could act as a coactivator for STAT5-dependent transcription upon growth hormone (GH) stimulation and could reveal an essential role of hepatic GR in the control of body growth. Mediates glucocorticoid-induced apoptosis. Promotes accurate chromosome segregation during mitosis. May act as a tumor suppressor. May play a negative role in adipogenesis through the regulation of lipolytic and antilipogenic gene expression. The protein is Glucocorticoid receptor (NR3C1) of Sus scrofa (Pig).